Here is a 388-residue protein sequence, read N- to C-terminus: Processive diacylglycerol beta-glucosyltransferase (388 aa).

This sequence belongs to the glycosyltransferase 28 family. UgtP subfamily.

The protein resides in the cell membrane. It carries out the reaction a 1,2-diacyl-3-O-(beta-D-glucopyranosyl)-sn-glycerol + UDP-alpha-D-glucose = a 1,2-diacyl-3-O-(beta-D-Glc-(1-&gt;6)-beta-D-Glc)-sn-glycerol + UDP + H(+). The catalysed reaction is a 1,2-diacyl-3-O-(beta-D-Glc-(1-&gt;6)-beta-D-Glc)-sn-glycerol + UDP-alpha-D-glucose = a 1,2-diacyl-3-O-(beta-D-Glc-(1-&gt;6)-beta-D-Glc-(1-&gt;6)-beta-D-Glc)-sn-glycerol + UDP + H(+). The enzyme catalyses a 1,2-diacyl-sn-glycerol + UDP-alpha-D-glucose = a 1,2-diacyl-3-O-(beta-D-glucopyranosyl)-sn-glycerol + UDP + H(+). Its pathway is glycolipid metabolism; diglucosyl-diacylglycerol biosynthesis. Processive glucosyltransferase involved in the biosynthesis of both the bilayer- and non-bilayer-forming membrane glucolipids. Is able to successively transfer up to three glucosyl residues to diacylglycerol (DAG), thereby catalyzing the formation of beta-monoglucosyl-DAG (3-O-(beta-D-glucopyranosyl)-1,2-diacyl-sn-glycerol), beta-diglucosyl-DAG (3-O-(beta-D-glucopyranosyl-beta-(1-&gt;6)-D-glucopyranosyl)-1,2-diacyl-sn-glycerol) and beta-triglucosyl-DAG (3-O-(beta-D-glucopyranosyl-beta-(1-&gt;6)-D-glucopyranosyl-beta-(1-&gt;6)-D-glucopyranosyl)-1,2-diacyl-sn-glycerol). Beta-diglucosyl-DAG is the predominant glycolipid found in Bacillales and is also used as a membrane anchor for lipoteichoic acid (LTA). This is Processive diacylglycerol beta-glucosyltransferase from Bacillus cereus (strain AH187).